The following is a 154-amino-acid chain: Ribonuclease H (154 aa).

Positions 1–142 (MLKQVEIFTD…CDELARRAAG (142 aa)) constitute an RNase H type-1 domain. D10, E48, D70, and D134 together coordinate Mg(2+).

The protein belongs to the RNase H family. As to quaternary structure, monomer. Requires Mg(2+) as cofactor.

It localises to the cytoplasm. It catalyses the reaction Endonucleolytic cleavage to 5'-phosphomonoester.. Its function is as follows. Endonuclease that specifically degrades the RNA of RNA-DNA hybrids. This is Ribonuclease H from Edwardsiella ictaluri (strain 93-146).